The sequence spans 579 residues: MKDTIRQLIQQALTRLVTEGVLPEGLTPAIQVENARDKTHGDFASNIAMMLAKPAGMKPRDLAEKLIAALPADQQISKVEIAGPGFLNFFQNTAALAARLDAALADPEKLSVRKAGAAQRVVVDLSAPNLAKEMHVGHLRSTIIGDGVANVLEFLGDTVIRQNHVGDWGTQFGMLLAYLQEKPATSDELSDLENFYRAAKQRFDESEEFAERARGLVVKLQAGDAECLALWTRFKDISLSHCQETYERLNVKLTPADVMGESAYNDDLANVVNDLKATGLLVESNGAQCVFLEEFRTADDTPLPVIVQKAGGGYLYATTDLAAIRYRSKVLKADRVLYFVDQRQALHFQQVFEVARRAGFVHDGMQLEHMGFGTMNGADGRPFKTRDGGTVKLIDLLDEAEERAYTLVREKNPEVAEAELRSIAKAVGISAVKYADLSKHRASDYSFNFDQMLSFEGNTAPYLLYAYTRVAGVFRKLGSAFDASKGQIVLAAPQEQELAARLAQFTETLNNVAEKGTPHVLCAYLYDLAGLFSSFYENCPILGAENPDQQQSRLRLAALTGRTLKQGLDLLGLETLERM.

The 'HIGH' region motif lies at 128–138 (PNLAKEMHVGH).

Belongs to the class-I aminoacyl-tRNA synthetase family. As to quaternary structure, monomer.

It localises to the cytoplasm. It catalyses the reaction tRNA(Arg) + L-arginine + ATP = L-arginyl-tRNA(Arg) + AMP + diphosphate. The sequence is that of Arginine--tRNA ligase from Pseudomonas syringae pv. syringae (strain B728a).